The following is a 393-amino-acid chain: MATAQLQRTSMSALIFPNKISTEQQSLVLVKRLLAVSVSCITYLRGIFPECAYGTRYLDDLCVKILREDKNCPGSTQLVKWMLGCYDALHKKYLRMVVLAVYTNPEDPQTISECYQFKFKYTSNGPVMDFTSKNQSNEPNMSSADTKKASILLIRKIYILMQNLGPLPNDVCLTMKLFYYDEVTPPDYQPPGFKDGDCEGVIFEGEPMYLNVGEVPTPFHTFKVKVTTERERMENIGSGILSPKQLKTPLQKILTDKDDLEDDQEHYISDEFDTETKMEEQEKNPGCSVRREAGFICEEDEMKSKGSPDFSISHSQVEQLVSKTSELDVSESKTRSGKIFQNKMANGNQQVKSKENRKRTQLESGKTVLHPFDSSSQESVPKRRKFSEPKERI.

The 203-residue stretch at 24-226 (QQSLVLVKRL…TPFHTFKVKV (203 aa)) folds into the HORMA domain. Positions 322-393 (SKTSELDVSE…RKFSEPKERI (72 aa)) are disordered. Basic and acidic residues predominate over residues 352-361 (KSKENRKRTQ). At Ser375 the chain carries Phosphoserine. The short motif at 382-385 (KRRK) is the Nuclear localization signal element.

Interacts with HORMAD2. Interacts with IHO1. Post-translationally, phosphorylated at Ser-376 in a SPO11-dependent manner.

Its subcellular location is the nucleus. It is found in the chromosome. Functionally, plays a key role in meiotic progression. Regulates 3 different functions during meiosis: ensures that sufficient numbers of processed DNA double-strand breaks (DSBs) are available for successful homology search by increasing the steady-state numbers of single-stranded DSB ends. Promotes synaptonemal-complex formation independently of its role in homology search. Plays a key role in the male mid-pachytene checkpoint and the female meiotic prophase checkpoint: required for efficient build-up of ATR activity on unsynapsed chromosome regions, a process believed to form the basis of meiotic silencing of unsynapsed chromatin (MSUC) and meiotic prophase quality control in both sexes. The polypeptide is HORMA domain-containing protein 1 (HORMAD1) (Bos taurus (Bovine)).